The sequence spans 200 residues: UPF0301 protein Veis_1517 (200 aa).

Belongs to the UPF0301 (AlgH) family.

This Verminephrobacter eiseniae (strain EF01-2) protein is UPF0301 protein Veis_1517.